The sequence spans 154 residues: Lipoprotein signal peptidase (154 aa).

Helical transmembrane passes span 55–75 and 84–104; these read GHMW…IYIM and LFSI…IDRV. Residues D111 and D129 contribute to the active site. A helical transmembrane segment spans residues 124–144; sequence IFNVADASLSVGVVLMLVYVF.

Belongs to the peptidase A8 family.

Its subcellular location is the cell membrane. It carries out the reaction Release of signal peptides from bacterial membrane prolipoproteins. Hydrolyzes -Xaa-Yaa-Zaa-|-(S,diacylglyceryl)Cys-, in which Xaa is hydrophobic (preferably Leu), and Yaa (Ala or Ser) and Zaa (Gly or Ala) have small, neutral side chains.. The protein operates within protein modification; lipoprotein biosynthesis (signal peptide cleavage). Its function is as follows. This protein specifically catalyzes the removal of signal peptides from prolipoproteins. The chain is Lipoprotein signal peptidase from Listeria welshimeri serovar 6b (strain ATCC 35897 / DSM 20650 / CCUG 15529 / CIP 8149 / NCTC 11857 / SLCC 5334 / V8).